The chain runs to 268 residues: Acyl-CoA-binding domain-containing protein 4 (268 aa).

The region spanning 12–101 (CQKQFQAAVS…MKLVAQKVID (90 aa)) is the ACB domain. Residues 23–32 (IQNLPKNGSY), 43–47 (YSYYK), K69, and Y88 contribute to the an acyl-CoA site. The tract at residues 151 to 175 (AVSEPPCLPKEPAPPSPESHSPRDL) is disordered. Over residues 156–167 (PCLPKEPAPPSP) the composition is skewed to pro residues. Residues S166 and S171 each carry the phosphoserine modification.

Its function is as follows. Binds medium- and long-chain acyl-CoA esters and may function as an intracellular carrier of acyl-CoA esters. In Homo sapiens (Human), this protein is Acyl-CoA-binding domain-containing protein 4 (ACBD4).